The chain runs to 620 residues: 1-deoxy-D-xylulose-5-phosphate synthase (620 aa).

Residues His80 and 121-123 contribute to the thiamine diphosphate site; that span reads GHS. Asp152 contributes to the Mg(2+) binding site. Residues 153 to 154, Asn181, Tyr288, and Glu370 contribute to the thiamine diphosphate site; that span reads GA. Asn181 provides a ligand contact to Mg(2+).

Belongs to the transketolase family. DXPS subfamily. As to quaternary structure, homodimer. Mg(2+) serves as cofactor. Thiamine diphosphate is required as a cofactor.

The catalysed reaction is D-glyceraldehyde 3-phosphate + pyruvate + H(+) = 1-deoxy-D-xylulose 5-phosphate + CO2. It participates in metabolic intermediate biosynthesis; 1-deoxy-D-xylulose 5-phosphate biosynthesis; 1-deoxy-D-xylulose 5-phosphate from D-glyceraldehyde 3-phosphate and pyruvate: step 1/1. Its function is as follows. Catalyzes the acyloin condensation reaction between C atoms 2 and 3 of pyruvate and glyceraldehyde 3-phosphate to yield 1-deoxy-D-xylulose-5-phosphate (DXP). This is 1-deoxy-D-xylulose-5-phosphate synthase from Escherichia coli (strain SMS-3-5 / SECEC).